The following is a 507-amino-acid chain: Histidine ammonia-lyase (507 aa).

Positions 141 to 143 form a cross-link, 5-imidazolinone (Ala-Gly); that stretch reads ASG. Ser142 carries the post-translational modification 2,3-didehydroalanine (Ser).

This sequence belongs to the PAL/histidase family. In terms of processing, contains an active site 4-methylidene-imidazol-5-one (MIO), which is formed autocatalytically by cyclization and dehydration of residues Ala-Ser-Gly.

The protein resides in the cytoplasm. The catalysed reaction is L-histidine = trans-urocanate + NH4(+). The protein operates within amino-acid degradation; L-histidine degradation into L-glutamate; N-formimidoyl-L-glutamate from L-histidine: step 1/3. This is Histidine ammonia-lyase from Burkholderia lata (strain ATCC 17760 / DSM 23089 / LMG 22485 / NCIMB 9086 / R18194 / 383).